The chain runs to 412 residues: Peptidase T (412 aa).

Histidine 81 is a binding site for Zn(2+). Aspartate 83 is an active-site residue. Aspartate 144 serves as a coordination point for Zn(2+). The active-site Proton acceptor is glutamate 178. Zn(2+)-binding residues include glutamate 179, aspartate 201, and histidine 383.

This sequence belongs to the peptidase M20B family. Requires Zn(2+) as cofactor.

It is found in the cytoplasm. It carries out the reaction Release of the N-terminal residue from a tripeptide.. Functionally, cleaves the N-terminal amino acid of tripeptides. This is Peptidase T from Bacillus cereus (strain Q1).